The following is a 92-amino-acid chain: DNA-binding protein HU (92 aa).

Residues 58–92 are disordered; it reads AGTARNPRTGETVNRPASKTARFQVGEGLKSSLNS.

This sequence belongs to the bacterial histone-like protein family. As to quaternary structure, homodimer.

In terms of biological role, histone-like DNA-binding protein which is capable of wrapping DNA to stabilize it, and thus to prevent its denaturation under extreme environmental conditions. The chain is DNA-binding protein HU (hup) from Caulobacter vibrioides (strain ATCC 19089 / CIP 103742 / CB 15) (Caulobacter crescentus).